The following is a 125-amino-acid chain: uncharacterized protein (125 aa).

It belongs to the HesB/IscA family.

This is an uncharacterized protein from Azospirillum brasilense.